Reading from the N-terminus, the 354-residue chain is Vascular endothelial growth factor D (354 aa).

A signal peptide spans 1 to 21; that stretch reads MYREWVVVNVFMMLYVQLVQG. A propeptide spans 22–88 (or 99 (in a minor form)); the sequence is SSNEHGPVKR…SRSASHRSTR (67 aa). Intrachain disulfides connect C111–C153, C142–C189, and C146–C191. N155 and N185 each carry an N-linked (GlcNAc...) asparagine glycan. A propeptide spanning residues 206–354 is cleaved from the precursor; the sequence is SIQIPEEDRC…AQGPHSRKNP (149 aa). A 1; approximate repeat occupies 222–237; the sequence is CPIDMLWDSNKCKCVL. A 4 X 16 AA repeats of C-X(10)-C-X-C-X(1,3)-C region spans residues 222 to 318; sequence CPIDMLWDSN…PDTCSCEDRC (97 aa). 3 repeat units span residues 258–273, 277–293, and 301–318. The N-linked (GlcNAc...) asparagine glycan is linked to N287.

It belongs to the PDGF/VEGF growth factor family. As to quaternary structure, homodimer; non-covalent and antiparallel. Post-translationally, undergoes a complex proteolytic maturation which generates a variety of processed secreted forms with increased activity toward VEGFR-3 and VEGFR-2. VEGF-D first form an antiparallel homodimer linked by disulfide bonds before secretion. The fully processed VEGF-D is composed mostly of two VEGF homology domains (VHDs) bound by non-covalent interactions. As to expression, highly expressed in lung, heart, small intestine and fetal lung, and at lower levels in skeletal muscle, colon, and pancreas.

It localises to the secreted. Growth factor active in angiogenesis, lymphangiogenesis and endothelial cell growth, stimulating their proliferation and migration and also has effects on the permeability of blood vessels. May function in the formation of the venous and lymphatic vascular systems during embryogenesis, and also in the maintenance of differentiated lymphatic endothelium in adults. Binds and activates VEGFR-2 (KDR/FLK1) and VEGFR-3 (FLT4) receptors. The polypeptide is Vascular endothelial growth factor D (Homo sapiens (Human)).